The sequence spans 80 residues: Pancreatic polypeptide (80 aa).

An N-terminal signal peptide occupies residues 1–25 (MPPRWASLLLLACSLLLLAVPPGTA). A Tyrosine amide modification is found at Tyr61. Positions 65-80 (SSSRVLCEEPMGAAGC) are excised as a propeptide.

The protein belongs to the NPY family.

The protein localises to the secreted. Hormone secreted by pancreatic cells that acts as a regulator of pancreatic and gastrointestinal functions. In Gallus gallus (Chicken), this protein is Pancreatic polypeptide (PPY).